A 721-amino-acid polypeptide reads, in one-letter code: Polyribonucleotide nucleotidyltransferase (721 aa).

2 residues coordinate Mg(2+): aspartate 495 and aspartate 501. The KH domain occupies 562–621; that stretch reads PRLLSFRIDPELIGTVIGPGGRTIKGITERTNTKIDIEDGGIVTIASHDGAAAEEAQKII. The region spanning 631–699 is the S1 motif domain; it reads GEIFPGVVTR…SRGRINLTLR (69 aa).

Belongs to the polyribonucleotide nucleotidyltransferase family. It depends on Mg(2+) as a cofactor.

It localises to the cytoplasm. The catalysed reaction is RNA(n+1) + phosphate = RNA(n) + a ribonucleoside 5'-diphosphate. Functionally, involved in mRNA degradation. Catalyzes the phosphorolysis of single-stranded polyribonucleotides processively in the 3'- to 5'-direction. The chain is Polyribonucleotide nucleotidyltransferase from Prochlorococcus marinus subsp. pastoris (strain CCMP1986 / NIES-2087 / MED4).